A 416-amino-acid polypeptide reads, in one-letter code: Adenylosuccinate synthetase (416 aa).

GTP-binding positions include 13–19 (GDEGKGK) and 41–43 (GHT). Asp14 (proton acceptor) is an active-site residue. Mg(2+)-binding residues include Asp14 and Gly41. IMP-binding positions include 14–17 (DEGK), 39–42 (NAGH), Thr126, Arg140, Gln220, Thr235, and Arg299. The active-site Proton donor is His42. Residue 295 to 301 (VSTGRKR) participates in substrate binding. Residues Arg301, 327–329 (KLD), and 405–407 (STS) each bind GTP.

This sequence belongs to the adenylosuccinate synthetase family. Homodimer. Requires Mg(2+) as cofactor.

It localises to the cytoplasm. It carries out the reaction IMP + L-aspartate + GTP = N(6)-(1,2-dicarboxyethyl)-AMP + GDP + phosphate + 2 H(+). It participates in purine metabolism; AMP biosynthesis via de novo pathway; AMP from IMP: step 1/2. Functionally, plays an important role in the de novo pathway of purine nucleotide biosynthesis. Catalyzes the first committed step in the biosynthesis of AMP from IMP. The sequence is that of Adenylosuccinate synthetase from Campylobacter lari (strain RM2100 / D67 / ATCC BAA-1060).